The sequence spans 504 residues: Deoxyguanosinetriphosphate triphosphohydrolase (504 aa).

Positions 66 to 273 constitute an HD domain; that stretch reads RLTHSMEVQQ…MEAADDISYC (208 aa).

This sequence belongs to the dGTPase family. Type 1 subfamily. Homotetramer. Requires Mg(2+) as cofactor.

The catalysed reaction is dGTP + H2O = 2'-deoxyguanosine + triphosphate + H(+). Functionally, dGTPase preferentially hydrolyzes dGTP over the other canonical NTPs. The sequence is that of Deoxyguanosinetriphosphate triphosphohydrolase from Enterobacter sp. (strain 638).